Here is a 995-residue protein sequence, read N- to C-terminus: KN motif and ankyrin repeat domain-containing protein 4 (995 aa).

Disordered stretches follow at residues 1 to 29 (MEKT…SVET) and 68 to 127 (TLPR…EVSY). Positions 101–124 (LGTQEQNQSPPLGNAPQASTSRSE) are enriched in polar residues. Residues 343–404 (SSLKQQVSAL…EGQFHQENAK (62 aa)) adopt a coiled-coil conformation. Disordered regions lie at residues 443-467 (ESWG…GNQS), 503-558 (EAGT…PTDA), 617-642 (QAHP…TSLK), 663-705 (LQFV…PDHK), and 721-740 (PEGT…VPHS). Over residues 511-523 (GPQGGTRGAGGFL) the composition is skewed to gly residues. The span at 526–549 (SDRKTPPAGREETSSNLPGKEHPG) shows a compositional bias: basic and acidic residues. The segment covering 625 to 640 (PASSSSPPVEISPSTS) has biased composition (low complexity). Over residues 680–693 (TSGEDSTPEDLSDS) the composition is skewed to acidic residues. A compositionally biased stretch (basic and acidic residues) spans 694–705 (EAEKKCDGPDHK). ANK repeat units lie at residues 823 to 853 (NGNT…NVDH), 862 to 890 (VMIT…NVNI), 895 to 924 (GGQT…DVNL), 928 to 958 (DGSS…DSSL), and 962 to 992 (AGRT…QGRS).

As to expression, strongly expressed in colon, liver, lung, skeletal muscle and kidney.

The protein localises to the cytoplasm. May be involved in the control of cytoskeleton formation by regulating actin polymerization. The polypeptide is KN motif and ankyrin repeat domain-containing protein 4 (KANK4) (Homo sapiens (Human)).